The following is a 259-amino-acid chain: Thiazole synthase (259 aa).

The active-site Schiff-base intermediate with DXP is Lys-99. 1-deoxy-D-xylulose 5-phosphate contacts are provided by residues Gly-160, 186 to 187 (AG), and 208 to 209 (NT).

This sequence belongs to the ThiG family. In terms of assembly, homotetramer. Forms heterodimers with either ThiH or ThiS.

It localises to the cytoplasm. The catalysed reaction is [ThiS sulfur-carrier protein]-C-terminal-Gly-aminoethanethioate + 2-iminoacetate + 1-deoxy-D-xylulose 5-phosphate = [ThiS sulfur-carrier protein]-C-terminal Gly-Gly + 2-[(2R,5Z)-2-carboxy-4-methylthiazol-5(2H)-ylidene]ethyl phosphate + 2 H2O + H(+). The protein operates within cofactor biosynthesis; thiamine diphosphate biosynthesis. Its function is as follows. Catalyzes the rearrangement of 1-deoxy-D-xylulose 5-phosphate (DXP) to produce the thiazole phosphate moiety of thiamine. Sulfur is provided by the thiocarboxylate moiety of the carrier protein ThiS. In vitro, sulfur can be provided by H(2)S. This Porphyromonas gingivalis (strain ATCC 33277 / DSM 20709 / CIP 103683 / JCM 12257 / NCTC 11834 / 2561) protein is Thiazole synthase.